The primary structure comprises 277 residues: Inositol monophosphatase 1 (277 aa).

Positions 70, 90, 92, and 93 each coordinate Mg(2+). A substrate-binding site is contributed by E70. 92–95 (IDGT) is a binding site for substrate. Phosphothreonine is present on T168. Substrate is bound by residues 194 to 196 (GTA), E213, and D220. Residue D220 participates in Mg(2+) binding.

It belongs to the inositol monophosphatase superfamily. In terms of assembly, homodimer. It depends on Mg(2+) as a cofactor. Post-translationally, the N-terminus is blocked.

It localises to the cytoplasm. The enzyme catalyses a myo-inositol phosphate + H2O = myo-inositol + phosphate. It catalyses the reaction 1D-myo-inositol 1-phosphate + H2O = myo-inositol + phosphate. It carries out the reaction 1D-myo-inositol 2-phosphate + H2O = myo-inositol + phosphate. The catalysed reaction is 1D-myo-inositol 3-phosphate + H2O = myo-inositol + phosphate. The enzyme catalyses 1D-myo-inositol 4-phosphate + H2O = myo-inositol + phosphate. It catalyses the reaction 1D-myo-inositol 5-phosphate + H2O = myo-inositol + phosphate. It carries out the reaction 1D-myo-inositol 6-phosphate + H2O = myo-inositol + phosphate. The catalysed reaction is scyllo-inositol 1-phosphate + H2O = scyllo-inositol + phosphate. The enzyme catalyses alpha-D-galactose 1-phosphate + H2O = D-galactose + phosphate. It catalyses the reaction alpha-D-glucose 1-phosphate + H2O = D-glucose + phosphate. It carries out the reaction D-glucose 6-phosphate + H2O = D-glucose + phosphate. The catalysed reaction is beta-D-fructose 1-phosphate + H2O = D-fructose + phosphate. The enzyme catalyses glycerol 2-phosphate + H2O = glycerol + phosphate. It catalyses the reaction adenosine 2'-phosphate + H2O = adenosine + phosphate. Its pathway is polyol metabolism; myo-inositol biosynthesis; myo-inositol from D-glucose 6-phosphate: step 2/2. Activity with myo-inositol monophosphate and D-galactose 1-phosphate is inhibited by Li(+), Ca(2+) and Mn(2+), but also by Mg(2+) at concentrations above 3 mM. In terms of biological role, phosphatase involved in the dephosphorylation of myo-inositol monophosphate to generate myo-inositol. Is also able to dephosphorylate scyllo-inositol-phosphate, myo-inositol 1,4-diphosphate, scyllo-inositol-1,3-diphosphate and scyllo-inositol-1,4-diphosphate. Also dephosphorylates in vitro other sugar-phosphates including D-galactose-1-phosphate, glucose-1-phosphate, glucose-6-phosphate, fructose-1-phosphate, beta-glycerophosphate and 2'-AMP. Responsible for the provision of inositol required for synthesis of phosphatidylinositol and polyphosphoinositides, and involved in maintaining normal brain function. Has been implicated as the pharmacological target for lithium Li(+) action in brain. Is equally active with myo-inositol monophosphate and D-galactose 1-phosphate. In Bos taurus (Bovine), this protein is Inositol monophosphatase 1 (IMPA1).